Reading from the N-terminus, the 422-residue chain is Gamma-glutamyl phosphate reductase (422 aa).

It belongs to the gamma-glutamyl phosphate reductase family.

It is found in the cytoplasm. It carries out the reaction L-glutamate 5-semialdehyde + phosphate + NADP(+) = L-glutamyl 5-phosphate + NADPH + H(+). It participates in amino-acid biosynthesis; L-proline biosynthesis; L-glutamate 5-semialdehyde from L-glutamate: step 2/2. Functionally, catalyzes the NADPH-dependent reduction of L-glutamate 5-phosphate into L-glutamate 5-semialdehyde and phosphate. The product spontaneously undergoes cyclization to form 1-pyrroline-5-carboxylate. In Shewanella piezotolerans (strain WP3 / JCM 13877), this protein is Gamma-glutamyl phosphate reductase.